The sequence spans 117 residues: Large ribosomal subunit protein bL20 (117 aa).

The protein belongs to the bacterial ribosomal protein bL20 family.

Binds directly to 23S ribosomal RNA and is necessary for the in vitro assembly process of the 50S ribosomal subunit. It is not involved in the protein synthesizing functions of that subunit. This Solidesulfovibrio magneticus (strain ATCC 700980 / DSM 13731 / RS-1) (Desulfovibrio magneticus) protein is Large ribosomal subunit protein bL20.